The following is a 611-amino-acid chain: Procollagen galactosyltransferase 1-B (611 aa).

The signal sequence occupies residues 1–24 (MSQAGVERLLKGLQILVLVLRLSA). 5 N-linked (GlcNAc...) asparagine glycosylation sites follow: Asn85, Asn173, Asn370, Asn373, and Asn568. Positions 576–591 (DRAKSRKTHQQEKLRS) are enriched in basic and acidic residues. The disordered stretch occupies residues 576–611 (DRAKSRKTHQQEKLRSEALNTPSMGSPFDNTARDEL). Positions 608 to 611 (RDEL) match the Prevents secretion from ER motif.

It belongs to the glycosyltransferase 25 family.

It localises to the endoplasmic reticulum lumen. The catalysed reaction is (5R)-5-hydroxy-L-lysyl-[collagen] + UDP-alpha-D-galactose = (5R)-5-O-(beta-D-galactosyl)-5-hydroxy-L-lysyl-[collagen] + UDP + H(+). In terms of biological role, beta-galactosyltransferase that transfers beta-galactose to hydroxylysine residues of type I collagen. By acting on collagen glycosylation, facilitates the formation of collagen triple helix. This chain is Procollagen galactosyltransferase 1-B (colgalt1-b), found in Xenopus laevis (African clawed frog).